We begin with the raw amino-acid sequence, 389 residues long: Acetyl-CoA decarbonylase/synthase complex subunit delta (389 aa).

Belongs to the CdhD family. In terms of assembly, heterodimer of delta and gamma chains. The ACDS complex is made up of alpha, epsilon, beta, gamma and delta chains with a probable stoichiometry of (alpha(2)epsilon(2))(4)-beta(8)-(gamma(1)delta(1))(8).

In terms of biological role, part of a complex that catalyzes the reversible cleavage of acetyl-CoA, allowing autotrophic growth from CO(2). Probably maintains the overall quaternary structure of the ACDS complex. The chain is Acetyl-CoA decarbonylase/synthase complex subunit delta from Methanothermobacter thermautotrophicus (strain ATCC 29096 / DSM 1053 / JCM 10044 / NBRC 100330 / Delta H) (Methanobacterium thermoautotrophicum).